The following is a 160-amino-acid chain: UPF0178 protein PA5247 (160 aa).

This sequence belongs to the UPF0178 family.

This chain is UPF0178 protein PA5247, found in Pseudomonas aeruginosa (strain ATCC 15692 / DSM 22644 / CIP 104116 / JCM 14847 / LMG 12228 / 1C / PRS 101 / PAO1).